Reading from the N-terminus, the 457-residue chain is UPF0328 protein ECU05_0030 (457 aa).

Disordered stretches follow at residues 1 to 112 (MPRP…PTAT) and 157 to 183 (VKSQ…NPRI). A compositionally biased stretch (basic and acidic residues) spans 74–94 (HTEGCHTHEANPEPNTKHTET). Over residues 102–112 (CPPPHPGPTAT) the composition is skewed to pro residues.

Belongs to the UPF0328 family.

This is UPF0328 protein ECU05_0030 from Encephalitozoon cuniculi (strain GB-M1) (Microsporidian parasite).